The chain runs to 340 residues: Glycerol-3-phosphate dehydrogenase [NAD(P)+] (340 aa).

NADPH-binding residues include S14, F15, R35, and K108. Residues K108 and G136 each coordinate sn-glycerol 3-phosphate. An NADPH-binding site is contributed by A140. Sn-glycerol 3-phosphate contacts are provided by K191, D244, S254, R255, and N256. K191 functions as the Proton acceptor in the catalytic mechanism. NADPH is bound at residue R255. E281 is an NADPH binding site.

This sequence belongs to the NAD-dependent glycerol-3-phosphate dehydrogenase family.

Its subcellular location is the cytoplasm. It catalyses the reaction sn-glycerol 3-phosphate + NAD(+) = dihydroxyacetone phosphate + NADH + H(+). The enzyme catalyses sn-glycerol 3-phosphate + NADP(+) = dihydroxyacetone phosphate + NADPH + H(+). The protein operates within membrane lipid metabolism; glycerophospholipid metabolism. Its function is as follows. Catalyzes the reduction of the glycolytic intermediate dihydroxyacetone phosphate (DHAP) to sn-glycerol 3-phosphate (G3P), the key precursor for phospholipid synthesis. This Pseudomonas aeruginosa (strain ATCC 15692 / DSM 22644 / CIP 104116 / JCM 14847 / LMG 12228 / 1C / PRS 101 / PAO1) protein is Glycerol-3-phosphate dehydrogenase [NAD(P)+].